Consider the following 939-residue polypeptide: Collagen-like protein 3 (939 aa).

Residues asparagine 15, asparagine 35, asparagine 39, and asparagine 82 are each glycosylated (N-linked (GlcNAc...) asparagine; by host). The segment covering 84–95 has biased composition (low complexity); sequence SGSSGPSGPQGP. 2 disordered regions span residues 84 to 332 and 358 to 697; these read SGSS…DLGN and SIKG…KGEA. 8 Collagen-like domains span residues 88–147, 148–207, 211–330, 364–423, 427–486, 493–552, 564–622, and 638–697; these read GPSG…NGDK, GNKG…KGDK, GNKG…SPDL, GDKG…SGAD, GDKG…KGEK, GESG…KGSK, GDKG…KGDV, and GDKG…KGEA. Composition is skewed to basic and acidic residues over residues 96–110, 123–182, 189–230, 237–260, 267–288, 297–314, 360–371, 378–416, 423–491, 498–527, 537–552, 560–580, and 589–684; these read KGEK…DKGE, DADK…DPGI, DADK…DIGL, DADK…DIGP, DADK…KGTK, KGDK…DKGE, KGDKGDKGDTGL, DADK…DTGL, DADK…DVGI, DADK…DTGI, KGDK…KGSK, KGDK…DIGI, and KGDK…DKGD. N-linked (GlcNAc...) asparagine; by host glycans are attached at residues asparagine 788, asparagine 820, asparagine 858, asparagine 919, and asparagine 925. Positions 896–923 are disordered; it reads NGETGAPTTDSGTNYGAGGGGGGNGTQG. Residues 910 to 923 show a composition bias toward gly residues; the sequence is YGAGGGGGGNGTQG.

Post-translationally, may be hydroxylated on lysine by the viral-encoded procollagen-lysine,2-oxoglutarate 5-dioxygenase.

It localises to the virion. Its function is as follows. May participate in the formation of a layer of cross-linked glycosylated fibrils at the viral surface thus giving it a hairy-like appearance. This is Collagen-like protein 3 from Acanthamoeba polyphaga (Amoeba).